Here is a 213-residue protein sequence, read N- to C-terminus: Large ribosomal subunit protein uL3 (213 aa).

The disordered stretch occupies residues 135 to 155; that stretch reads THGSKNHRLPGSTGAGTTPGR.

The protein belongs to the universal ribosomal protein uL3 family. In terms of assembly, part of the 50S ribosomal subunit. Forms a cluster with proteins L14 and L19.

In terms of biological role, one of the primary rRNA binding proteins, it binds directly near the 3'-end of the 23S rRNA, where it nucleates assembly of the 50S subunit. This Synechocystis sp. (strain ATCC 27184 / PCC 6803 / Kazusa) protein is Large ribosomal subunit protein uL3.